A 226-amino-acid chain; its full sequence is LysM and putative peptidoglycan-binding domain-containing protein 1 (226 aa).

Phosphoserine is present on residues serine 23 and serine 33. The LysM domain maps to 40–84; sequence LEHQLEPGDTLAGLALKYGVTMEQIKRTNRLYTNDSIFLKKTLYI. The disordered stretch occupies residues 95 to 156; that stretch reads NGLDSEEEND…PSHDLSASDF (62 aa). Residues 98 to 107 show a composition bias toward acidic residues; the sequence is DSEEENDGEE. Serine 99 is modified (phosphoserine). The segment covering 142 to 151 has biased composition (polar residues); sequence QETSTPSHDL. 4 positions are modified to phosphoserine: serine 165, serine 180, serine 193, and serine 211. The tract at residues 170–226 is disordered; it reads AAAQKLRKGESGVPEEDTGLYPSSPRMQQRAVLGPVPLTRTSRTQTLRDQEDEIFKL. The span at 215–226 shows a compositional bias: basic and acidic residues; sequence TLRDQEDEIFKL.

In Mus musculus (Mouse), this protein is LysM and putative peptidoglycan-binding domain-containing protein 1 (Lysmd1).